The sequence spans 215 residues: Probable transaldolase (215 aa).

The active-site Schiff-base intermediate with substrate is the K83.

Belongs to the transaldolase family. Type 3B subfamily.

It is found in the cytoplasm. It catalyses the reaction D-sedoheptulose 7-phosphate + D-glyceraldehyde 3-phosphate = D-erythrose 4-phosphate + beta-D-fructose 6-phosphate. Its pathway is carbohydrate degradation; pentose phosphate pathway; D-glyceraldehyde 3-phosphate and beta-D-fructose 6-phosphate from D-ribose 5-phosphate and D-xylulose 5-phosphate (non-oxidative stage): step 2/3. Its function is as follows. Transaldolase is important for the balance of metabolites in the pentose-phosphate pathway. This Desulforapulum autotrophicum (strain ATCC 43914 / DSM 3382 / VKM B-1955 / HRM2) (Desulfobacterium autotrophicum) protein is Probable transaldolase.